The chain runs to 355 residues: Type II methyltransferase M.MthZI (355 aa).

It belongs to the N(4)/N(6)-methyltransferase family. N(4) subfamily.

The catalysed reaction is a 2'-deoxycytidine in DNA + S-adenosyl-L-methionine = an N(4)-methyl-2'-deoxycytidine in DNA + S-adenosyl-L-homocysteine + H(+). Functionally, a beta subtype methylase that recognizes the double-stranded sequence 5'-CTAG-3', methylates C-1 on both strands, and protects the DNA from cleavage by the MthZI endonuclease. The sequence is that of Type II methyltransferase M.MthZI from Methanothermobacter thermautotrophicus (Methanobacterium thermoformicicum).